We begin with the raw amino-acid sequence, 245 residues long: Folate receptor gamma (245 aa).

The N-terminal stretch at 1–22 (MDMAWQMMQLLLLALVTAAGSA) is a signal peptide. Cystine bridges form between cysteine 37–cysteine 65, cysteine 57–cysteine 105, cysteine 66–cysteine 109, cysteine 89–cysteine 175, cysteine 96–cysteine 146, cysteine 135–cysteine 209, cysteine 139–cysteine 189, and cysteine 152–cysteine 169. Folate is bound by residues aspartate 103 and tyrosine 107. N-linked (GlcNAc...) asparagine glycosylation occurs at asparagine 121. Residues 124-128 (WRKER), 157-162 (HKGWNW), and serine 196 each bind folate. N-linked (GlcNAc...) asparagine glycosylation is present at asparagine 161. An N-linked (GlcNAc...) asparagine glycan is attached at asparagine 201.

It belongs to the folate receptor family. Spleen, thymus, bone marrow, ovarian carcinoma, and uterine carcinoma.

It localises to the secreted. In terms of biological role, binds to folate and reduced folic acid derivatives and mediates delivery of 5-methyltetrahydrofolate to the interior of cells. Isoform Short does not bind folate. This is Folate receptor gamma (FOLR3) from Homo sapiens (Human).